A 184-amino-acid polypeptide reads, in one-letter code: NADH-quinone oxidoreductase subunit B (184 aa).

Residues Cys37, Cys38, Cys103, and Cys132 each contribute to the [4Fe-4S] cluster site.

Belongs to the complex I 20 kDa subunit family. In terms of assembly, NDH-1 is composed of 14 different subunits. Subunits NuoB, C, D, E, F, and G constitute the peripheral sector of the complex. [4Fe-4S] cluster serves as cofactor.

The protein localises to the cell membrane. It carries out the reaction a quinone + NADH + 5 H(+)(in) = a quinol + NAD(+) + 4 H(+)(out). Functionally, NDH-1 shuttles electrons from NADH, via FMN and iron-sulfur (Fe-S) centers, to quinones in the respiratory chain. The immediate electron acceptor for the enzyme in this species is believed to be a menaquinone. Couples the redox reaction to proton translocation (for every two electrons transferred, four hydrogen ions are translocated across the cytoplasmic membrane), and thus conserves the redox energy in a proton gradient. The sequence is that of NADH-quinone oxidoreductase subunit B from Rhodococcus erythropolis (strain PR4 / NBRC 100887).